The following is a 123-amino-acid chain: Holo-[acyl-carrier-protein] synthase (123 aa).

D8 and E60 together coordinate Mg(2+).

Belongs to the P-Pant transferase superfamily. AcpS family. Mg(2+) serves as cofactor.

It localises to the cytoplasm. It carries out the reaction apo-[ACP] + CoA = holo-[ACP] + adenosine 3',5'-bisphosphate + H(+). Transfers the 4'-phosphopantetheine moiety from coenzyme A to a Ser of acyl-carrier-protein. This Ehrlichia ruminantium (strain Welgevonden) protein is Holo-[acyl-carrier-protein] synthase.